Consider the following 408-residue polypeptide: WD repeat-containing protein JIP5 (408 aa).

WD repeat units lie at residues 5–44 (PVGSQIFDVVFHPSSAIAYTGLLNGHIKAFAYGEQGDSHN), 50–86 (PSKRSCRGLSLNGDGSKLYAVGKSKALHIVDTTTTDI), 87–130 (DARS…SVKT), 133–172 (QHFDYISDFLWLDDKKQLVATSGDGTLSVMDVRAKEPKVV), 177–216 (DQEDDLLSIVAIKSAQKILVGTQLGILSVFNRKKGWGDCV), and 221–267 (GHPL…FLGV). Residues 311–408 (VDSDEEEDDE…VIDKDFFDGL (98 aa)) are disordered. Composition is skewed to acidic residues over residues 313–339 (SDEEEDDEEEWGGIEGADGSEGEEDEE) and 356–366 (DESDDEDEEME). Basic and acidic residues predominate over residues 396-408 (KETVIDKDFFDGL).

This sequence belongs to the WD repeat WDR55 family.

It is found in the nucleus. It localises to the nucleolus. This is WD repeat-containing protein JIP5 (JIP5) from Coprinopsis cinerea (strain Okayama-7 / 130 / ATCC MYA-4618 / FGSC 9003) (Inky cap fungus).